We begin with the raw amino-acid sequence, 525 residues long: Peptide chain release factor 3 (525 aa).

The tr-type G domain maps to 11–279; the sequence is ERRRTFAIIS…AFVDMAPAPE (269 aa). GTP-binding positions include 20–27, 88–92, and 142–145; these read SHPDAGKT, DTPGH, and NKLD.

The protein belongs to the TRAFAC class translation factor GTPase superfamily. Classic translation factor GTPase family. PrfC subfamily.

It is found in the cytoplasm. In terms of biological role, increases the formation of ribosomal termination complexes and stimulates activities of RF-1 and RF-2. It binds guanine nucleotides and has strong preference for UGA stop codons. It may interact directly with the ribosome. The stimulation of RF-1 and RF-2 is significantly reduced by GTP and GDP, but not by GMP. The polypeptide is Peptide chain release factor 3 (Latilactobacillus sakei subsp. sakei (strain 23K) (Lactobacillus sakei subsp. sakei)).